The primary structure comprises 155 residues: UPF0178 protein RHE_CH02229 (155 aa).

It belongs to the UPF0178 family.

The sequence is that of UPF0178 protein RHE_CH02229 from Rhizobium etli (strain ATCC 51251 / DSM 11541 / JCM 21823 / NBRC 15573 / CFN 42).